A 144-amino-acid polypeptide reads, in one-letter code: Phospholipase A2, membrane associated (144 aa).

An N-terminal signal peptide occupies residues 1 to 20; that stretch reads MKTLLLLAVIMAIGLLQVHG. 7 disulfides stabilise this stretch: Cys-46/Cys-137, Cys-48/Cys-64, Cys-63/Cys-117, Cys-69/Cys-144, Cys-70/Cys-110, Cys-79/Cys-103, and Cys-97/Cys-108. Tyr-47, Gly-49, and Ser-51 together coordinate Ca(2+). Residue His-67 is part of the active site. Residue Asp-68 participates in Ca(2+) binding. Asp-111 is an active-site residue.

This sequence belongs to the phospholipase A2 family. The cofactor is Ca(2+).

It is found in the secreted. The protein localises to the cell membrane. Its subcellular location is the mitochondrion outer membrane. It carries out the reaction a 1,2-diacyl-sn-glycero-3-phosphoethanolamine + H2O = a 1-acyl-sn-glycero-3-phosphoethanolamine + a fatty acid + H(+). The catalysed reaction is 1-hexadecanoyl-2-(9Z-octadecenoyl)-sn-glycero-3-phosphoethanolamine + H2O = 1-hexadecanoyl-sn-glycero-3-phosphoethanolamine + (9Z)-octadecenoate + H(+). It catalyses the reaction 1-hexadecanoyl-2-(9Z,12Z-octadecadienoyl)-sn-glycero-3-phosphoethanolamine + H2O = 1-hexadecanoyl-sn-glycero-3-phosphoethanolamine + (9Z,12Z)-octadecadienoate + H(+). The enzyme catalyses 1-hexadecanoyl-2-(5Z,8Z,11Z,14Z-eicosatetraenoyl)-sn-glycero-3-phosphoethanolamine + H2O = 1-hexadecanoyl-sn-glycero-3-phosphoethanolamine + (5Z,8Z,11Z,14Z)-eicosatetraenoate + H(+). It carries out the reaction N-hexadecanoyl-1,2-di-(9Z-octadecenoyl)-sn-glycero-3-phosphoethanolamine + H2O = N-hexadecanoyl-1-(9Z-octadecenoyl)-sn-glycero-3-phosphoethanolamine + (9Z)-octadecenoate + H(+). The catalysed reaction is 1,2-dihexadecanoyl-sn-glycero-3-phospho-(1'-sn-glycerol) + H2O = 1-hexadecanoyl-sn-glycero-3-phospho-(1'-sn-glycerol) + hexadecanoate + H(+). It catalyses the reaction 1-hexadecanoyl-2-(9Z-octadecenoyl)-sn-glycero-3-phosphoglycerol + H2O = 1-hexadecanoyl-sn-glycero-3-phosphoglycerol + (9Z)-octadecenoate + H(+). The enzyme catalyses 1-hexadecanoyl-2-(9Z-octadecenoyl)-sn-glycero-3-phospho-(1'-sn-glycerol) + H2O = 1-hexadecanoyl-sn-glycero-3-phospho-(1'-sn-glycerol) + (9Z)-octadecenoate + H(+). It carries out the reaction a 1,2-diacyl-sn-glycero-3-phosphocholine + H2O = a 1-acyl-sn-glycero-3-phosphocholine + a fatty acid + H(+). The catalysed reaction is 1,2-dihexadecanoyl-sn-glycero-3-phosphocholine + H2O = 1-hexadecanoyl-sn-glycero-3-phosphocholine + hexadecanoate + H(+). It catalyses the reaction 1-hexadecanoyl-2-(9Z-octadecenoyl)-sn-glycero-3-phosphocholine + H2O = 1-hexadecanoyl-sn-glycero-3-phosphocholine + (9Z)-octadecenoate + H(+). The enzyme catalyses 1-hexadecanoyl-2-(9Z,12Z-octadecadienoyl)-sn-glycero-3-phosphocholine + H2O = (9Z,12Z)-octadecadienoate + 1-hexadecanoyl-sn-glycero-3-phosphocholine + H(+). It carries out the reaction 1-hexadecanoyl-2-(4Z,7Z,10Z,13Z,16Z,19Z-docosahexaenoyl)-sn-glycero-3-phosphocholine + H2O = (4Z,7Z,10Z,13Z,16Z,19Z)-docosahexaenoate + 1-hexadecanoyl-sn-glycero-3-phosphocholine + H(+). Its function is as follows. Secretory calcium-dependent phospholipase A2 that primarily targets extracellular phospholipids with implications in host antimicrobial defense, inflammatory response and tissue regeneration. Hydrolyzes the ester bond of the fatty acyl group attached at sn-2 position of phospholipids (phospholipase A2 activity) with preference for phosphatidylethanolamines and phosphatidylglycerols over phosphatidylcholines. Contributes to lipid remodeling of cellular membranes and generation of lipid mediators involved in pathogen clearance. Displays bactericidal activity against Gram-positive bacteria by directly hydrolyzing phospholipids of the bacterial membrane. Upon sterile inflammation, targets membrane phospholipids of extracellular mitochondria released from activated platelets, generating free unsaturated fatty acids such as arachidonate that is used by neighboring leukocytes to synthesize inflammatory eicosanoids such as leukotrienes. Simultaneously, by compromising mitochondrial membrane integrity, promotes the release in circulation of potent damage-associated molecular pattern molecules that activate the innate immune response. Plays a stem cell regulator role in the intestinal crypt. Within intracellular compartment mediates Paneth cell differentiation and its stem cell supporting functions by inhibiting Wnt signaling pathway in intestinal stem cell (ICS). Secreted in the intestinal lumen upon inflammation, acts in an autocrine way and promotes prostaglandin E2 synthesis that stimulates Wnt signaling pathway in ICS cells and tissue regeneration. May play a role in the biosynthesis of N-acyl ethanolamines that regulate energy metabolism and inflammation. Hydrolyzes N-acyl phosphatidylethanolamines to N-acyl lysophosphatidylethanolamines, which are further cleaved by a lysophospholipase D to release N-acyl ethanolamines. Independent of its catalytic activity, acts as a ligand for integrins. Binds to and activates integrins ITGAV:ITGB3, ITGA4:ITGB1 and ITGA5:ITGB1. Binds to a site (site 2) which is distinct from the classical ligand-binding site (site 1) and induces integrin conformational changes and enhanced ligand binding to site 1. Induces cell proliferation in an integrin-dependent manner. This chain is Phospholipase A2, membrane associated (PLA2G2A), found in Bos taurus (Bovine).